Here is a 327-residue protein sequence, read N- to C-terminus: Spermidine/putrescine import ATP-binding protein PotA (327 aa).

One can recognise an ABC transporter domain in the interval 5 to 235 (IKVEAVEKHF…PKTLFVATFI (231 aa)). Residue 37-44 (GPSGCGKT) participates in ATP binding.

It belongs to the ABC transporter superfamily. Spermidine/putrescine importer (TC 3.A.1.11.1) family. As to quaternary structure, the complex is composed of two ATP-binding proteins (PotA), two transmembrane proteins (PotB and PotC) and a solute-binding protein (PotD).

The protein localises to the cell membrane. The catalysed reaction is ATP + H2O + polyamine-[polyamine-binding protein]Side 1 = ADP + phosphate + polyamineSide 2 + [polyamine-binding protein]Side 1.. Its function is as follows. Part of the ABC transporter complex PotABCD involved in spermidine/putrescine import. Responsible for energy coupling to the transport system. This chain is Spermidine/putrescine import ATP-binding protein PotA, found in Bacillus thuringiensis (strain Al Hakam).